A 2169-amino-acid chain; its full sequence is Vitellogenin-A1 (2169 aa).

An N-terminal signal peptide occupies residues 1–46 (MATDGITSRFGFNERRRTHNRNSCRILEDKMLAKLLLLALAGLTAA). N-linked (GlcNAc...) asparagine glycans are attached at residues Asn107 and Asn125. One can recognise a Vitellogenin domain in the interval 116 to 1008 (WMPNYEYVYN…SNDHRYPSGL (893 aa)). Residues Tyr159 and Tyr163 each carry the sulfotyrosine modification. 3 N-linked (GlcNAc...) asparagine glycosylation sites follow: Asn360, Asn391, and Asn435. Disordered stretches follow at residues 426-481 (DKKN…DKVE) and 514-570 (NDTS…SSSE). Over residues 438–461 (SSSSSSSSSSSSSSSESSSSSSES) the composition is skewed to low complexity. Asn514 is a glycosylation site (N-linked (GlcNAc...) asparagine). Over residues 517 to 531 (SSDSSSSDSSSSSSS) the composition is skewed to low complexity. Asn538 carries an N-linked (GlcNAc...) asparagine glycan. A compositionally biased stretch (low complexity) spans 541–570 (SSYSSSSSSSSSSSSSESSSYSSSSSSSSE). N-linked (GlcNAc...) asparagine glycans are attached at residues Asn587, Asn763, and Asn781. Tyr1067, Tyr1070, and Tyr1074 each carry sulfotyrosine. N-linked (GlcNAc...) asparagine glycosylation is found at Asn1140, Asn1233, and Asn1336. A sulfotyrosine mark is found at Tyr1563, Tyr1564, and Tyr1570. N-linked (GlcNAc...) asparagine glycosylation is found at Asn1652 and Asn1696. Sulfotyrosine is present on residues Tyr1737, Tyr1806, Tyr1809, Tyr1822, Tyr1824, and Tyr1888. A VWFD domain is found at 1770-1979 (PSCSFSNDYF…SYAITGQNCT (210 aa)). Intrachain disulfides connect Cys1772–Cys1942 and Cys1794–Cys1978. An N-linked (GlcNAc...) asparagine glycan is attached at Asn1977. Residues 2026 to 2063 (EESSSSSSSSSSDSSSSSSSSESSSRSRSGSSSSSSSS) show a composition bias toward low complexity. The tract at residues 2026 to 2081 (EESSSSSSSSSSDSSSSSSSSESSSRSRSGSSSSSSSSEEQKEFHPHKQEHSMKEC) is disordered. Over residues 2064–2079 (EEQKEFHPHKQEHSMK) the composition is skewed to basic and acidic residues.

Glycosylated, phosphorylated and sulfated. The large subunit is sulfated more extensively than the small one. In terms of tissue distribution, produced by the fat body, where it is cleaved in the rough endoplasmic reticulum or cis-Golgi before being secreted into hemolymph. It is then sequestered by a single class of receptor mediated endocytosis in the ovary.

In terms of biological role, precursor of the egg-yolk proteins that are sources of nutrients during embryonic development. May supply aromatic amino acids to the cuticle of rapidly developing embryos. This is Vitellogenin-A1 (VGA1) from Aedes aegypti (Yellowfever mosquito).